The following is a 180-amino-acid chain: Succinate dehydrogenase cytochrome B subunit, mitochondrial (180 aa).

At 1–82 (MFATRSFCLS…WYLSSLHRIT (82 aa)) the chain is on the mitochondrial matrix side. A helical membrane pass occupies residues 83–103 (GCVVAGTLYAFAMGYLVAPLA). Residues 104–122 (GYSLDTATISGLIQQVPTW) are Mitochondrial intermembrane-facing. A helical transmembrane segment spans residues 123-143 (IKVPAKFVISYPLTFHIFNGI). H138 contributes to the heme binding site. Residues 144-159 (RHLIWDTTKELSLKGV) are Mitochondrial matrix-facing. The chain crosses the membrane as a helical span at residues 160–180 (YRTGYAVLALSVLTSGYFAMI).

It belongs to the cytochrome b560 family. In terms of assembly, forms part of complex II containing four subunits: a 70 kDa flavoprotein (FP), a 27 kDa iron-sulfur protein (IP), a cytochrome B and a membrane-anchoring protein. Requires heme as cofactor.

It is found in the mitochondrion inner membrane. It functions in the pathway carbohydrate metabolism; tricarboxylic acid cycle. Its function is as follows. Membrane-anchoring subunit of succinate dehydrogenase (SDH) that is involved in complex II of the mitochondrial electron transport chain and is responsible for transferring electrons from succinate to ubiquinone (coenzyme Q). The sequence is that of Succinate dehydrogenase cytochrome B subunit, mitochondrial (sdh3) from Schizosaccharomyces pombe (strain 972 / ATCC 24843) (Fission yeast).